Here is a 418-residue protein sequence, read N- to C-terminus: Secreted aspartic protease 5 (418 aa).

Residues 1–18 (MFLKNILSVLAFALLIDA) form the signal peptide. Residues 19–76 (APVKRSPGFVTLDFNVKRSLVDPDDPTVEAKRSPLFLEFTPSEFPVDETGRDGDVDKR) constitute a propeptide, activation peptide. Residues 90–404 (YTADITVGSD…NLDDKKISMA (315 aa)) enclose the Peptidase A1 domain. The active site involves aspartate 108. 108-110 (DTG) contributes to the pepstatin A binding site. The cysteines at positions 123 and 135 are disulfide-linked. Pepstatin A is bound at residue 161–162 (GD). Glutamate 268 contributes to the Zn(2+) binding site. Aspartate 294 is a catalytic residue. 294–298 (DSGTT) lines the pepstatin A pocket. Residues cysteine 332 and cysteine 370 are joined by a disulfide bond.

The protein belongs to the peptidase A1 family.

It localises to the secreted. The enzyme catalyses Preferential cleavage at the carboxyl of hydrophobic amino acids, but fails to cleave 15-Leu-|-Tyr-16, 16-Tyr-|-Leu-17 and 24-Phe-|-Phe-25 of insulin B chain. Activates trypsinogen, and degrades keratin.. Its activity is regulated as follows. Inhibited by pepstatin A analogs. In terms of biological role, secreted aspartic peptidases (SAPs) are a group of ten acidic hydrolases considered as key virulence factors. These enzymes supply the fungus with nutrient amino acids as well as are able to degrade the selected host's proteins involved in the immune defense. Moreover, acts toward human hemoglobin though limited proteolysis to generate a variety of antimicrobial hemocidins, enabling to compete with the other microorganisms of the same physiological niche using the microbicidal peptides generated from the host protein. The chain is Secreted aspartic protease 5 from Candida albicans (strain SC5314 / ATCC MYA-2876) (Yeast).